Here is a 258-residue protein sequence, read N- to C-terminus: 1-(5-phosphoribosyl)-5-[(5-phosphoribosylamino)methylideneamino] imidazole-4-carboxamide isomerase (258 aa).

The active-site Proton acceptor is the D9. D131 functions as the Proton donor in the catalytic mechanism.

This sequence belongs to the HisA/HisF family.

It is found in the cytoplasm. The enzyme catalyses 1-(5-phospho-beta-D-ribosyl)-5-[(5-phospho-beta-D-ribosylamino)methylideneamino]imidazole-4-carboxamide = 5-[(5-phospho-1-deoxy-D-ribulos-1-ylimino)methylamino]-1-(5-phospho-beta-D-ribosyl)imidazole-4-carboxamide. Its pathway is amino-acid biosynthesis; L-histidine biosynthesis; L-histidine from 5-phospho-alpha-D-ribose 1-diphosphate: step 4/9. The polypeptide is 1-(5-phosphoribosyl)-5-[(5-phosphoribosylamino)methylideneamino] imidazole-4-carboxamide isomerase (Salinibacter ruber (strain DSM 13855 / M31)).